The sequence spans 151 residues: Probable cyclic pyranopterin monophosphate synthase (151 aa).

Residues Met-66–His-68 and Met-102–Glu-103 each bind substrate. Asp-117 is an active-site residue.

It belongs to the MoaC family. As to quaternary structure, homohexamer; trimer of dimers.

It catalyses the reaction (8S)-3',8-cyclo-7,8-dihydroguanosine 5'-triphosphate = cyclic pyranopterin phosphate + diphosphate. It functions in the pathway cofactor biosynthesis; molybdopterin biosynthesis. Catalyzes the conversion of (8S)-3',8-cyclo-7,8-dihydroguanosine 5'-triphosphate to cyclic pyranopterin monophosphate (cPMP). This chain is Probable cyclic pyranopterin monophosphate synthase, found in Sulfurisphaera tokodaii (strain DSM 16993 / JCM 10545 / NBRC 100140 / 7) (Sulfolobus tokodaii).